A 277-amino-acid chain; its full sequence is Putative phosphoenolpyruvate synthase regulatory protein (277 aa).

152–159 (GVSRCGKT) serves as a coordination point for ADP.

It belongs to the pyruvate, phosphate/water dikinase regulatory protein family. PSRP subfamily.

The enzyme catalyses [pyruvate, water dikinase] + ADP = [pyruvate, water dikinase]-phosphate + AMP + H(+). It carries out the reaction [pyruvate, water dikinase]-phosphate + phosphate + H(+) = [pyruvate, water dikinase] + diphosphate. In terms of biological role, bifunctional serine/threonine kinase and phosphorylase involved in the regulation of the phosphoenolpyruvate synthase (PEPS) by catalyzing its phosphorylation/dephosphorylation. In Chromohalobacter salexigens (strain ATCC BAA-138 / DSM 3043 / CIP 106854 / NCIMB 13768 / 1H11), this protein is Putative phosphoenolpyruvate synthase regulatory protein.